Consider the following 223-residue polypeptide: RNA pyrophosphohydrolase (223 aa).

Positions 6–149 (GFRPNVGIIL…KRGVYEMALT (144 aa)) constitute a Nudix hydrolase domain. Positions 38–59 (GGIDRGESPEQAMFRELHEEVG) match the Nudix box motif. The interval 175-223 (ERHMPDGGAPAGLDLPPGGSFDPHPDITSASDDPSPPPHNKAPFLPSQR) is disordered. Residues 180-193 (DGGAPAGLDLPPGG) show a composition bias toward low complexity.

The protein belongs to the Nudix hydrolase family. RppH subfamily. Requires a divalent metal cation as cofactor.

Functionally, accelerates the degradation of transcripts by removing pyrophosphate from the 5'-end of triphosphorylated RNA, leading to a more labile monophosphorylated state that can stimulate subsequent ribonuclease cleavage. This Variovorax paradoxus (strain S110) protein is RNA pyrophosphohydrolase.